The following is a 258-amino-acid chain: Global transcriptional regulator CodY (258 aa).

The tract at residues 1–156 (MSSLLSKTRR…SATIVGMEML (156 aa)) is GAF domain. The H-T-H motif DNA-binding region spans 204–223 (ASKIADKVGITRSVIVNALR).

The protein belongs to the CodY family.

The protein resides in the cytoplasm. Its function is as follows. DNA-binding global transcriptional regulator which is involved in the adaptive response to starvation and acts by directly or indirectly controlling the expression of numerous genes in response to nutrient availability. During rapid exponential growth, CodY is highly active and represses genes whose products allow adaptation to nutrient depletion. This is Global transcriptional regulator CodY from Clostridium botulinum (strain Alaska E43 / Type E3).